A 247-amino-acid chain; its full sequence is Uridylate kinase (247 aa).

18-21 is an ATP binding site; sequence KLSG. G60 is a UMP binding site. G61 and R65 together coordinate ATP. UMP contacts are provided by residues D80 and 141-148; that span reads TGNPFFTT. T168, Y174, and D177 together coordinate ATP.

This sequence belongs to the UMP kinase family. Homohexamer.

The protein resides in the cytoplasm. It carries out the reaction UMP + ATP = UDP + ADP. It participates in pyrimidine metabolism; CTP biosynthesis via de novo pathway; UDP from UMP (UMPK route): step 1/1. Inhibited by UTP. Functionally, catalyzes the reversible phosphorylation of UMP to UDP. In Ectopseudomonas mendocina (strain ymp) (Pseudomonas mendocina), this protein is Uridylate kinase.